The primary structure comprises 855 residues: Potassium transporter 13 (855 aa).

The segment at 1–67 is disordered; it reads MFHVEEESSG…EMDSDEEDDN (67 aa). Over 1 to 105 the chain is Cytoplasmic; that stretch reads MFHVEEESSG…EIEDTGIGKK (105 aa). Over residues 36-51 the composition is skewed to acidic residues; sequence EKDDYEVNEDYDDDGY. The chain crosses the membrane as a helical span at residues 106–126; that stretch reads LILALQTLGVVFGDIGTSPLY. Topologically, residues 127–142 are extracellular; that stretch reads TFTVMFRRSPINDKED. Residues 143–163 traverse the membrane as a helical segment; sequence IIGALSLVIYTLILIPLVKYV. The Cytoplasmic segment spans residues 164–233; sequence HFVLWANDDG…RLEASMALKK (70 aa). The chain crosses the membrane as a helical span at residues 234 to 254; that stretch reads LLLILVLAGTAMVIADAVVTP. Residues 255-268 are Extracellular-facing; sequence AMSVMSAIGGLKVG. The helical transmembrane segment at 269 to 289 threads the bilayer; the sequence is VGVIEQDQVVVISVSFLVILF. Topologically, residues 290–298 are cytoplasmic; it reads SVQKYGTSK. Residues 299–319 traverse the membrane as a helical segment; sequence LGLVLGPALLLWFFCLAGIGI. The Extracellular segment spans residues 320–346; it reads YNLVKYDSSVFKAFNPAYIYFFFKRNS. The chain crosses the membrane as a helical span at residues 347–367; it reads VNAWYALGGCVLCATGSEAMF. Over 368–379 the chain is Cytoplasmic; it reads ADLSYFSVHSIQ. The helical transmembrane segment at 380–400 threads the bilayer; sequence LTFILLVLPCLLLGYLGQAAY. The Extracellular portion of the chain corresponds to 401–415; the sequence is LSENFSAAGDAFFSS. N-linked (GlcNAc...) asparagine glycosylation occurs at Asn-404. The chain crosses the membrane as a helical span at residues 416–436; the sequence is VPSSLFWPVFLISNVAALIAS. Over 437 to 467 the chain is Cytoplasmic; it reads RAMTTATFTCIKQSIALGCFPRLKIIHTSKK. The helical transmembrane segment at 468-488 threads the bilayer; that stretch reads FIGQIYIPVLNWSLLVVCLIV. Topologically, residues 489–503 are extracellular; that stretch reads VCSTSNIFAIGNAYG. Residues 504 to 524 traverse the membrane as a helical segment; the sequence is IAELGIMMTTTILVTLIMLLI. Over 525 to 528 the chain is Cytoplasmic; the sequence is WQTN. Residues 529–549 form a helical membrane-spanning segment; that stretch reads IIVVSMFAIVSLIVELVFFSS. Residues 550-553 are Extracellular-facing; it reads VCSS. Residues 554–574 traverse the membrane as a helical segment; that stretch reads VADGSWIILVFATIMFLIMFV. At 575 to 855 the chain is on the cytoplasmic side; that stretch reads WNYGSKLKYE…LMQVGMTYMV (281 aa). At Ser-766 the chain carries Phosphoserine.

Belongs to the HAK/KUP transporter (TC 2.A.72.3) family.

The protein resides in the cell membrane. Functionally, probable potassium transporter. This is Potassium transporter 13 (POT13) from Arabidopsis thaliana (Mouse-ear cress).